The primary structure comprises 638 residues: LIM domain kinase 2 (638 aa).

LIM zinc-binding domains follow at residues 12-63 (CPGC…CPKD) and 72-124 (CHGC…CGKC). The PDZ domain occupies 152–239 (LISMPATTEG…TLQLLIEHDP (88 aa)). Threonine 210 is subject to Phosphothreonine. Residues 279 to 304 (LRRRSLRRSNSISKSPGPSSPKEPLL) form a disordered region. A compositionally biased stretch (low complexity) spans 286–302 (RSNSISKSPGPSSPKEP). 2 positions are modified to phosphoserine: serine 293 and serine 298. The 278-residue stretch at 331–608 (LIHGEVLGKG…DSFEALSLYL (278 aa)) folds into the Protein kinase domain. ATP contacts are provided by residues 337–345 (LGKGFFGQA) and lysine 360. Aspartate 451 is a catalytic residue. The residue at position 505 (threonine 505) is a Phosphothreonine; by ROCK1 and CDC42BP.

This sequence belongs to the protein kinase superfamily. TKL Ser/Thr protein kinase family. As to quaternary structure, interacts with LIMK2b. In terms of assembly, interacts with LIMK2a. Binds ROCK1 and MARF1. Interacts with NISCH. Phosphorylated on serine and/or threonine residues by ROCK1.

It is found in the cytoplasm. The protein localises to the cytoskeleton. Its subcellular location is the spindle. The protein resides in the microtubule organizing center. It localises to the centrosome. It is found in the nucleus. The protein localises to the perinuclear region. It catalyses the reaction L-seryl-[protein] + ATP = O-phospho-L-seryl-[protein] + ADP + H(+). The catalysed reaction is L-threonyl-[protein] + ATP = O-phospho-L-threonyl-[protein] + ADP + H(+). Serine/threonine-protein kinase that plays an essential role in the regulation of actin filament dynamics. Acts downstream of several Rho family GTPase signal transduction pathways. Involved in astral microtubule organization and mitotic spindle orientation during early stages of mitosis by mediating phosphorylation of TPPP. Displays serine/threonine-specific phosphorylation of myelin basic protein and histone (MBP) in vitro. Suppresses ciliogenesis via multiple pathways; phosphorylation of CFL1, suppression of directional trafficking of ciliary vesicles to the ciliary base, and by facilitating YAP1 nuclear localization where it acts as a transcriptional corepressor of the TEAD4 target genes AURKA and PLK1. The chain is LIM domain kinase 2 (LIMK2) from Homo sapiens (Human).